Consider the following 180-residue polypeptide: Dynactin subunit 6 (180 aa).

This sequence belongs to the dynactin subunits 5/6 family. Dynactin subunit 6 subfamily. Subunit of dynactin, a multiprotein complex part of a tripartite complex with dynein and a adapter, such as BICDL1, BICD2 or HOOK3. The dynactin complex is built around ACTR1A/ACTB filament and consists of an actin-related filament composed of a shoulder domain, a pointed end and a barbed end.

The protein resides in the cytoplasm. The protein localises to the cytoskeleton. In terms of biological role, part of the dynactin complex that activates the molecular motor dynein for ultra-processive transport along microtubules. The sequence is that of Dynactin subunit 6 (dnc-6) from Caenorhabditis elegans.